The following is a 189-amino-acid chain: Protein Rex (189 aa).

Residues 1-16 (MPKTRRRPRRSQRKRP) show a composition bias toward basic residues. The interval 1-27 (MPKTRRRPRRSQRKRPPTPWPTSQGLD) is disordered. A Nuclear localization signal, and RNA-binding (RxRE) motif is present at residues 2–18 (PKTRRRPRRSQRKRPPT). The segment at 56–70 (RPAYIVTPYWPPVQS) is homomultimerization. Residue serine 70 is modified to Phosphoserine; by host. Residues 73-189 (SPGTPSMDAL…PPSPGPSCPT (117 aa)) form a disordered region. Over residues 80-94 (DALSAQLYSSLSLDS) the composition is skewed to low complexity. Residues 82–93 (LSAQLYSSLSLD) carry the Nuclear export signal motif. The interval 123 to 131 (PSSRPCANT) is homomultimerization. The span at 143–164 (LGSTSQPCLFQTPDSGPKTCTP) shows a compositional bias: polar residues. Phosphothreonine; by host is present on threonine 174. Serine 177 carries the post-translational modification Phosphoserine; by host. Pro residues predominate over residues 178-189 (FPPPSPGPSCPT).

It belongs to the deltaretrovirus Rex protein family. In terms of assembly, homomultimer. Multimeric assembly is essential for activity and involves XPO1. Binds to human XPO1 and KPNB1. Interacts (via N-terminal nuclear localization signal) with human NPM1.

Its subcellular location is the host nucleus. It is found in the host nucleolus. The protein resides in the host cytoplasm. In terms of biological role, rex escorts unspliced gag-pro-pol and singly spliced env mRNAs out of the nucleus of infected cells. These mRNAs carry a recognition sequence called Rex responsive element (RxRE or XRE) located at the 3' region of the long terminal repeat (LTR). This function is essential since most HTLV proteins are translated from unspliced or partially spliced pre-mRNAs that cannot exit the nucleus by the pathway used by fully processed cellular mRNAs. Rex itself is translated from a fully spliced mRNA that probably readily exits the nucleus. Rex's nuclear localization signal (NLS) binds directly to KPNB1/importin beta-1 without previous binding to KPNA1/importin alpha-1. KPNB1 binds to the GDP bound form of RAN (Ran-GDP) and targets Rex to the nucleus. In the nucleus, the conversion from Ran-GDP to Ran-GTP dissociates Rex from KPNB1 and allows Rex's binding to the RRE in viral pre-mRNAs. Rex multimerizes on the RRE via cooperative assembly. This multimerization is critical for its full biological activity, since it may shield the viral RNA from being spliced or down-regulated, and probably exposes Rex's nuclear export signal (NES) to the surface. Rex can then form a complex with XPO1/CRM1, RANBP3 and Ran-GTP, leading to nuclear export of the complex. Conversion from Ran-GTP to Ran-GDP mediates dissociation of the Rex/RRE/XPO1/RANBP3/RAN complex, so that Rex can return to the nucleus for a subsequent round of export. The sequence is that of Protein Rex from Human T-cell leukemia virus 1 (strain Japan ATK-1 subtype A) (HTLV-1).